A 309-amino-acid polypeptide reads, in one-letter code: Probable lipid kinase YegS-like (309 aa).

Positions 1-134 (MAPSHWRVIL…VDLLRIDADH (134 aa)) constitute a DAGKc domain. ATP-binding positions include Thr-39, 65–71 (GDGTLSE), and Thr-96. Mg(2+) contacts are provided by Leu-219, Asp-222, and Leu-224. Glu-280 serves as the catalytic Proton acceptor.

This sequence belongs to the diacylglycerol/lipid kinase family. YegS lipid kinase subfamily. It depends on Mg(2+) as a cofactor. Ca(2+) serves as cofactor.

It localises to the cytoplasm. Its function is as follows. Probably phosphorylates lipids; the in vivo substrate is unknown. This chain is Probable lipid kinase YegS-like, found in Xanthomonas euvesicatoria pv. vesicatoria (strain 85-10) (Xanthomonas campestris pv. vesicatoria).